We begin with the raw amino-acid sequence, 408 residues long: AA9 family lytic polysaccharide monooxygenase A (408 aa).

The signal sequence occupies residues M1–A20. H21 and H103 together coordinate Cu(2+). C63 and C186 are joined by a disulfide. An N-linked (GlcNAc...) asparagine glycan is attached at N151. Position 172 (H172) interacts with O2. Cu(2+) is bound at residue Y183. N331 and N381 each carry an N-linked (GlcNAc...) asparagine glycan. Positions G369–V405 constitute a CBM1 domain.

This sequence belongs to the polysaccharide monooxygenase AA9 family. Cu(2+) serves as cofactor.

Its subcellular location is the secreted. The enzyme catalyses [(1-&gt;4)-beta-D-glucosyl]n+m + reduced acceptor + O2 = 4-dehydro-beta-D-glucosyl-[(1-&gt;4)-beta-D-glucosyl]n-1 + [(1-&gt;4)-beta-D-glucosyl]m + acceptor + H2O.. Functionally, lytic polysaccharide monooxygenase (LPMO) that depolymerizes crystalline and amorphous polysaccharides via the oxidation of scissile alpha- or beta-(1-4)-glycosidic bonds, yielding C4 oxidation products. Catalysis by LPMOs requires the reduction of the active-site copper from Cu(II) to Cu(I) by a reducing agent and H(2)O(2) or O(2) as a cosubstrate. The protein is AA9 family lytic polysaccharide monooxygenase A (eglD) of Aspergillus kawachii (strain NBRC 4308) (White koji mold).